The chain runs to 85 residues: Sec-independent protein translocase protein TatA (85 aa).

Residues 1–21 (MGSMSIWHWLVVGVLVLLLFG) traverse the membrane as a helical segment. Residues 39–85 (FKKGMSEEDEPTQPAEPRPTPRLQQQPPIEPNADPKLQPMQDDRPQH) form a disordered region.

It belongs to the TatA/E family. The Tat system comprises two distinct complexes: a TatABC complex, containing multiple copies of TatA, TatB and TatC subunits, and a separate TatA complex, containing only TatA subunits. Substrates initially bind to the TatABC complex, which probably triggers association of the separate TatA complex to form the active translocon.

The protein localises to the cell inner membrane. Functionally, part of the twin-arginine translocation (Tat) system that transports large folded proteins containing a characteristic twin-arginine motif in their signal peptide across membranes. TatA could form the protein-conducting channel of the Tat system. In Rhizorhabdus wittichii (strain DSM 6014 / CCUG 31198 / JCM 15750 / NBRC 105917 / EY 4224 / RW1) (Sphingomonas wittichii), this protein is Sec-independent protein translocase protein TatA.